The chain runs to 28 residues: Aryl acylamidase (28 aa).

As to quaternary structure, homodimer.

The enzyme catalyses an anilide + H2O = aniline + a carboxylate + H(+). The chain is Aryl acylamidase from Nocardia globerula.